Consider the following 252-residue polypeptide: Zinc finger protein 511 (252 aa).

3 C2H2-type zinc fingers span residues 80–105, 107–130, and 144–169; these read FACQ…HTLH, NVCS…LEWH, and YQCL…VRMH. Positions 177–221 are disordered; the sequence is FDKPKKSRSPASAEAPGDSGERSEGEAMEICSEPVAASPAPAGER. Arg-240 bears the Omega-N-methylarginine mark.

The protein belongs to the krueppel C2H2-type zinc-finger protein family.

The protein resides in the nucleus. In terms of biological role, may be involved in transcriptional regulation. This Homo sapiens (Human) protein is Zinc finger protein 511.